The primary structure comprises 614 residues: uncharacterized protein (614 aa).

2 consecutive transmembrane segments (helical) span residues 494–516 (VAYW…GSTL) and 552–574 (LLIG…IVHA). The segment at 588–614 (AVRPRADKDIQTLTHRDEAEEDQEEDS) is disordered. Positions 591-605 (PRADKDIQTLTHRDE) are enriched in basic and acidic residues.

The protein localises to the cell membrane. This is an uncharacterized protein from Treponema pallidum (strain Nichols).